Consider the following 176-residue polypeptide: Calcineurin subunit B type 2 (176 aa).

A lipid anchor (N-myristoyl glycine) is attached at glycine 2. 4 consecutive EF-hand domains span residues 18-53, 57-85, 87-122, and 128-163; these read DEIKRLGRSFKKMDLDKSGSLSVDEFMSLPELQQNP, RVIDIFDTDGNGEVDFREFIVGTSQFSVK, DEEQKLRFAFRIYDMDNDGFISNGELFQVLKMMVGN, and QLQQLVDKSILVLDKDGDGRISFEEFRDVVRTMEIH. Ca(2+)-binding residues include aspartate 31, aspartate 33, serine 35, serine 37, glutamate 42, aspartate 63, aspartate 65, asparagine 67, glutamate 69, glutamate 74, aspartate 100, aspartate 102, aspartate 104, and glutamate 111. Positions 131–136 are calcineurin A binding; the sequence is QLVDKS. Residues aspartate 141, aspartate 143, aspartate 145, arginine 147, and glutamate 152 each contribute to the Ca(2+) site.

Belongs to the calcineurin regulatory subunit family. In terms of assembly, forms a complex composed of a calmodulin-dependent catalytic subunit (also known as calcineurin A) and a regulatory Ca(2+)-binding subunit (also known as calcineurin B). There are three catalytic subunits, each encoded by a separate gene (PPP3CA, PPP3CB, and PPP3CC) and two regulatory subunits which are also encoded by separate genes (PPP3R1 and PPP3R2). Interacts with SPATA33 (via PQIIIT motif). In terms of tissue distribution, testis specific.

Its subcellular location is the mitochondrion. In terms of biological role, regulatory subunit of calcineurin, a calcium-dependent, calmodulin stimulated protein phosphatase. Confers calcium sensitivity. This is Calcineurin subunit B type 2 (Ppp3r2) from Rattus norvegicus (Rat).